Here is a 158-residue protein sequence, read N- to C-terminus: NAD(P)H-quinone oxidoreductase subunit J, chloroplastic (158 aa).

The protein belongs to the complex I 30 kDa subunit family. In terms of assembly, NDH is composed of at least 16 different subunits, 5 of which are encoded in the nucleus.

The protein localises to the plastid. It is found in the chloroplast thylakoid membrane. The enzyme catalyses a plastoquinone + NADH + (n+1) H(+)(in) = a plastoquinol + NAD(+) + n H(+)(out). The catalysed reaction is a plastoquinone + NADPH + (n+1) H(+)(in) = a plastoquinol + NADP(+) + n H(+)(out). NDH shuttles electrons from NAD(P)H:plastoquinone, via FMN and iron-sulfur (Fe-S) centers, to quinones in the photosynthetic chain and possibly in a chloroplast respiratory chain. The immediate electron acceptor for the enzyme in this species is believed to be plastoquinone. Couples the redox reaction to proton translocation, and thus conserves the redox energy in a proton gradient. In Lupinus luteus (European yellow lupine), this protein is NAD(P)H-quinone oxidoreductase subunit J, chloroplastic.